The sequence spans 332 residues: Galactinol synthase 7 (332 aa).

Lys101 is a catalytic residue. Mn(2+)-binding residues include Asp117, Asp119, and His255.

It belongs to the glycosyltransferase 8 family. Galactosyltransferase subfamily. It depends on a divalent metal cation as a cofactor.

It localises to the cytoplasm. The enzyme catalyses myo-inositol + UDP-alpha-D-galactose = alpha-D-galactosyl-(1-&gt;3)-1D-myo-inositol + UDP + H(+). Galactinol synthase involved in the biosynthesis of raffinose family oligosaccharides (RFOs) that function as osmoprotectants. May promote plant stress tolerance. This Arabidopsis thaliana (Mouse-ear cress) protein is Galactinol synthase 7 (GOLS7).